A 138-amino-acid polypeptide reads, in one-letter code: ATP synthase epsilon chain (138 aa).

It belongs to the ATPase epsilon chain family. In terms of assembly, F-type ATPases have 2 components, CF(1) - the catalytic core - and CF(0) - the membrane proton channel. CF(1) has five subunits: alpha(3), beta(3), gamma(1), delta(1), epsilon(1). CF(0) has three main subunits: a, b and c.

It is found in the cell inner membrane. Its function is as follows. Produces ATP from ADP in the presence of a proton gradient across the membrane. The chain is ATP synthase epsilon chain from Geotalea daltonii (strain DSM 22248 / JCM 15807 / FRC-32) (Geobacter daltonii).